Reading from the N-terminus, the 719-residue chain is DNA ligase (719 aa).

Residues 42 to 46 (DAEYD), 91 to 92 (SL), and glutamate 125 contribute to the NAD(+) site. Lysine 127 serves as the catalytic N6-AMP-lysine intermediate. NAD(+) is bound by residues arginine 148, glutamate 184, lysine 300, and lysine 324. Residues cysteine 429, cysteine 432, cysteine 447, and cysteine 453 each coordinate Zn(2+). The 82-residue stretch at 638–719 (TASSPIAEKI…WMRLIKGHNI (82 aa)) folds into the BRCT domain.

The protein belongs to the NAD-dependent DNA ligase family. LigA subfamily. It depends on Mg(2+) as a cofactor. Requires Mn(2+) as cofactor.

It catalyses the reaction NAD(+) + (deoxyribonucleotide)n-3'-hydroxyl + 5'-phospho-(deoxyribonucleotide)m = (deoxyribonucleotide)n+m + AMP + beta-nicotinamide D-nucleotide.. Its function is as follows. DNA ligase that catalyzes the formation of phosphodiester linkages between 5'-phosphoryl and 3'-hydroxyl groups in double-stranded DNA using NAD as a coenzyme and as the energy source for the reaction. It is essential for DNA replication and repair of damaged DNA. The protein is DNA ligase of Bartonella tribocorum (strain CIP 105476 / IBS 506).